A 109-amino-acid chain; its full sequence is uncharacterized protein (109 aa).

It is found in the mitochondrion. This is an uncharacterized protein from Arabidopsis thaliana (Mouse-ear cress).